The following is a 495-amino-acid chain: Probable serine/threonine-protein kinase DDB_G0292354 (495 aa).

The Protein kinase domain occupies 16–275 (WTVVKKIGQG…PNYVFLQTLL (260 aa)). Residues 22 to 30 (IGQGAFGEI) and lysine 45 contribute to the ATP site. Residue aspartate 136 is the Proton acceptor of the active site. Positions 293–469 (EVQTNSGASS…NGNGSNSQPI (177 aa)) are disordered. Composition is skewed to low complexity over residues 295–333 (QTNS…NSSA) and 354–364 (NNSNNNNNNNN). A compositionally biased stretch (polar residues) spans 385–395 (ESNSQIANSSE). Positions 435 to 466 (SNNNNINNNNNNYNNNNNNNNNSHMNGNGSNS) are enriched in low complexity.

The protein belongs to the protein kinase superfamily. CK1 Ser/Thr protein kinase family.

The sequence is that of Probable serine/threonine-protein kinase DDB_G0292354 from Dictyostelium discoideum (Social amoeba).